The primary structure comprises 269 residues: Histidinol-phosphatase (269 aa).

The protein belongs to the PHP hydrolase family. HisK subfamily.

It carries out the reaction L-histidinol phosphate + H2O = L-histidinol + phosphate. It functions in the pathway amino-acid biosynthesis; L-histidine biosynthesis; L-histidine from 5-phospho-alpha-D-ribose 1-diphosphate: step 8/9. The protein is Histidinol-phosphatase (hisK) of Lactococcus lactis subsp. lactis (strain IL1403) (Streptococcus lactis).